A 173-amino-acid chain; its full sequence is Translation initiation factor IF-3 (173 aa).

The protein belongs to the IF-3 family. In terms of assembly, monomer.

The protein resides in the cytoplasm. In terms of biological role, IF-3 binds to the 30S ribosomal subunit and shifts the equilibrium between 70S ribosomes and their 50S and 30S subunits in favor of the free subunits, thus enhancing the availability of 30S subunits on which protein synthesis initiation begins. The sequence is that of Translation initiation factor IF-3 from Ehrlichia chaffeensis (strain ATCC CRL-10679 / Arkansas).